The chain runs to 127 residues: Holo-[acyl-carrier-protein] synthase (127 aa).

Residues Asp-7 and Glu-53 each contribute to the Mg(2+) site.

It belongs to the P-Pant transferase superfamily. AcpS family. The cofactor is Mg(2+).

It localises to the cytoplasm. The enzyme catalyses apo-[ACP] + CoA = holo-[ACP] + adenosine 3',5'-bisphosphate + H(+). In terms of biological role, transfers the 4'-phosphopantetheine moiety from coenzyme A to a Ser of acyl-carrier-protein. This is Holo-[acyl-carrier-protein] synthase from Herpetosiphon aurantiacus (strain ATCC 23779 / DSM 785 / 114-95).